Consider the following 468-residue polypeptide: Monocarboxylate transporter 6 (468 aa).

Over 1 to 13 (MARALEQADGRWA) the chain is Cytoplasmic. The helical transmembrane segment at 14–34 (WVVLLSSLVTQALTLGFPTCI) threads the bilayer. The Extracellular portion of the chain corresponds to 35–53 (GVFFTDLQRDFQASNSETS). A helical transmembrane segment spans residues 54-74 (WFPSILGAMVHGGGPLCSILV). Topologically, residues 75–80 (KHFGCR) are cytoplasmic. A helical membrane pass occupies residues 81 to 101 (VTMMLGGVLASLGMVVSTFSG). Residue S102 is a topological domain, extracellular. Residues 103-122 (LTHLFLTAGVITGLGMCFSF) traverse the membrane as a helical segment. Residues 123–138 (QSSITVVGLYFVRRRP) lie on the Cytoplasmic side of the membrane. Residues 139 to 159 (LANALASMGLSMGVTLWPLLA) traverse the membrane as a helical segment. Over 160–171 (RYLLETLGWRGA) the chain is Extracellular. A helical transmembrane segment spans residues 172–192 (FLIFGGILLHCCVCGALLRPV). Over 193-239 (ATNEVPEPKEDPLLPPKIPTRSCLATCVSTIRYHLAFDILRHNMGFC) the chain is Cytoplasmic. The helical transmembrane segment at 240–260 (IYVTGVTWMNLGFALPHIFLV) threads the bilayer. Residues 261 to 274 (PYAMHHGVDDYWAA) are Extracellular-facing. Residues 275 to 295 (MLMSIVGFCNIFLRPMAGLLL) form a helical membrane-spanning segment. At 296–306 (AGRKSLAAYRK) the chain is on the cytoplasmic side. The helical transmembrane segment at 307–327 (YLFAVAILINGLTNLICTVSA) threads the bilayer. The Extracellular segment spans residues 328 to 330 (DFR). The chain crosses the membrane as a helical span at residues 331–351 (VLLGYCLVYSLSMCGVGILVF). The Cytoplasmic segment spans residues 352-368 (QVLMDIVPMDRFPSALG). Residues 369-389 (LFTILCGVTSLISPPLAGLLL) form a helical membrane-spanning segment. The Extracellular portion of the chain corresponds to 390–396 (DKTNNFS). The chain crosses the membrane as a helical span at residues 397 to 417 (YVFYMSSGFLVSGSLILGVGF). Topologically, residues 418 to 468 (YAAEKKKLKQDGQAKMENATSEMTPMHDLTSEDKDSAKKQPYPESIYMTNV) are cytoplasmic. The disordered stretch occupies residues 429-468 (GQAKMENATSEMTPMHDLTSEDKDSAKKQPYPESIYMTNV). The span at 446 to 455 (LTSEDKDSAK) shows a compositional bias: basic and acidic residues.

Belongs to the major facilitator superfamily. Monocarboxylate porter (TC 2.A.1.13) family.

Its subcellular location is the cell membrane. Proton-linked monocarboxylate transporter. Catalyzes the rapid transport across the plasma membrane of many monocarboxylates such as lactate, pyruvate, branched-chain oxo acids derived from leucine, valine and isoleucine, and the ketone bodies acetoacetate, beta-hydroxybutyrate and acetate. The polypeptide is Monocarboxylate transporter 6 (Slc16a5) (Mus musculus (Mouse)).